The primary structure comprises 286 residues: Phosphatidylglycerol--prolipoprotein diacylglyceryl transferase (286 aa).

The next 4 helical transmembrane spans lie at 25 to 45 (WYAL…RMLL), 65 to 85 (FILW…VLFY), 103 to 123 (GGMS…LFGW), and 127 to 147 (VPIL…LFLG). Residue R148 coordinates a 1,2-diacyl-sn-glycero-3-phospho-(1'-sn-glycerol). 3 helical membrane-spanning segments follow: residues 188 to 208 (AGLE…AGAL), 212 to 232 (GLII…GEFF), and 248 to 268 (MGML…ITTW).

This sequence belongs to the Lgt family.

Its subcellular location is the cell inner membrane. It catalyses the reaction L-cysteinyl-[prolipoprotein] + a 1,2-diacyl-sn-glycero-3-phospho-(1'-sn-glycerol) = an S-1,2-diacyl-sn-glyceryl-L-cysteinyl-[prolipoprotein] + sn-glycerol 1-phosphate + H(+). The protein operates within protein modification; lipoprotein biosynthesis (diacylglyceryl transfer). In terms of biological role, catalyzes the transfer of the diacylglyceryl group from phosphatidylglycerol to the sulfhydryl group of the N-terminal cysteine of a prolipoprotein, the first step in the formation of mature lipoproteins. This chain is Phosphatidylglycerol--prolipoprotein diacylglyceryl transferase, found in Rhodopseudomonas palustris (strain ATCC BAA-98 / CGA009).